Consider the following 326-residue polypeptide: DNA-directed RNA polymerase subunit alpha (326 aa).

Residues 1-231 are alpha N-terminal domain (alpha-NTD); it reads MQTNLLKPKI…DQLVVFAALE (231 aa). The interval 247-326 is alpha C-terminal domain (alpha-CTD); the sequence is VDPMLMRPVD…ESWPPANLEK (80 aa).

Belongs to the RNA polymerase alpha chain family. In terms of assembly, homodimer. The RNAP catalytic core consists of 2 alpha, 1 beta, 1 beta' and 1 omega subunit. When a sigma factor is associated with the core the holoenzyme is formed, which can initiate transcription.

The enzyme catalyses RNA(n) + a ribonucleoside 5'-triphosphate = RNA(n+1) + diphosphate. DNA-dependent RNA polymerase catalyzes the transcription of DNA into RNA using the four ribonucleoside triphosphates as substrates. This Polynucleobacter asymbioticus (strain DSM 18221 / CIP 109841 / QLW-P1DMWA-1) (Polynucleobacter necessarius subsp. asymbioticus) protein is DNA-directed RNA polymerase subunit alpha.